The primary structure comprises 58 residues: Photosystem II reaction center X protein (58 aa).

A helical membrane pass occupies residues 27 to 47 (IGSFLAAAAFIVVPAASFLIW).

It belongs to the PsbX family. Type 2 subfamily. In terms of assembly, PSII consists of a core antenna complex that captures photons, and an electron transfer chain that converts photonic excitation into a charge separation. PSII forms dimeric complexes.

It localises to the cellular thylakoid membrane. Functionally, involved in the binding and/or turnover of quinones at the Q(B) site of Photosystem II. The sequence is that of Photosystem II reaction center X protein from Prochlorococcus marinus (strain MIT 9211).